An 87-amino-acid chain; its full sequence is Glutaredoxin (87 aa).

The region spanning 1–87 is the Glutaredoxin domain; that stretch reads MFVVIFGRPG…LMKEQFGIVA (87 aa). C11 and C14 are oxidised to a cystine.

This sequence belongs to the glutaredoxin family. In terms of assembly, monomer.

It is found in the cytoplasm. Has a glutathione-disulfide oxidoreductase activity in the presence of NADPH and glutathione reductase. Reduces low molecular weight disulfides and proteins. This Haemophilus influenzae (strain ATCC 51907 / DSM 11121 / KW20 / Rd) protein is Glutaredoxin (grxA).